The sequence spans 329 residues: Ribosomal RNA small subunit methyltransferase C (329 aa).

It belongs to the methyltransferase superfamily. RsmC family. As to quaternary structure, monomer.

Its subcellular location is the cytoplasm. It carries out the reaction guanosine(1207) in 16S rRNA + S-adenosyl-L-methionine = N(2)-methylguanosine(1207) in 16S rRNA + S-adenosyl-L-homocysteine + H(+). Its function is as follows. Specifically methylates the guanine in position 1207 of 16S rRNA in the 30S particle. This is Ribosomal RNA small subunit methyltransferase C from Haemophilus ducreyi (strain 35000HP / ATCC 700724).